A 796-amino-acid polypeptide reads, in one-letter code: Probable phosphoketolase (796 aa).

This sequence belongs to the XFP family. Thiamine diphosphate is required as a cofactor.

This Streptomyces coelicolor (strain ATCC BAA-471 / A3(2) / M145) protein is Probable phosphoketolase.